A 288-amino-acid chain; its full sequence is Acetyl-coenzyme A carboxylase carboxyl transferase subunit beta, chloroplastic (288 aa).

In terms of domain architecture, CoA carboxyltransferase N-terminal spans Leu-30–Lys-288. The Zn(2+) site is built by Cys-34, Cys-37, Cys-53, and Cys-56. The C4-type zinc finger occupies Cys-34 to Cys-56.

Belongs to the AccD/PCCB family. In terms of assembly, acetyl-CoA carboxylase is a heterohexamer composed of biotin carboxyl carrier protein, biotin carboxylase and 2 subunits each of ACCase subunit alpha and ACCase plastid-coded subunit beta (accD). It depends on Zn(2+) as a cofactor.

Its subcellular location is the plastid. It localises to the chloroplast stroma. The catalysed reaction is N(6)-carboxybiotinyl-L-lysyl-[protein] + acetyl-CoA = N(6)-biotinyl-L-lysyl-[protein] + malonyl-CoA. The protein operates within lipid metabolism; malonyl-CoA biosynthesis; malonyl-CoA from acetyl-CoA: step 1/1. Component of the acetyl coenzyme A carboxylase (ACC) complex. Biotin carboxylase (BC) catalyzes the carboxylation of biotin on its carrier protein (BCCP) and then the CO(2) group is transferred by the transcarboxylase to acetyl-CoA to form malonyl-CoA. The chain is Acetyl-coenzyme A carboxylase carboxyl transferase subunit beta, chloroplastic from Pyropia yezoensis (Susabi-nori).